The primary structure comprises 116 residues: MANHRIDRVGMEIKREVNAILQKKVRDPRVEGVTITEVQMLGDLSAAKVYYTVMSDLASDNQKAQLGLEKATGTIKRELGKNLTMYKIPDLIFEKDNSIAYGNKIDQLLRALDKKS.

This sequence belongs to the RbfA family. Monomer. Binds 30S ribosomal subunits, but not 50S ribosomal subunits or 70S ribosomes.

It localises to the cytoplasm. In terms of biological role, one of several proteins that assist in the late maturation steps of the functional core of the 30S ribosomal subunit. Associates with free 30S ribosomal subunits (but not with 30S subunits that are part of 70S ribosomes or polysomes). Required for efficient processing of 16S rRNA. May interact with the 5'-terminal helix region of 16S rRNA. This chain is Ribosome-binding factor A, found in Streptococcus uberis (strain ATCC BAA-854 / 0140J).